Consider the following 105-residue polypeptide: Large ribosomal subunit protein uL23 (105 aa).

It belongs to the universal ribosomal protein uL23 family. Part of the 50S ribosomal subunit. Contacts protein L29, and trigger factor when it is bound to the ribosome.

Its function is as follows. One of the early assembly proteins it binds 23S rRNA. One of the proteins that surrounds the polypeptide exit tunnel on the outside of the ribosome. Forms the main docking site for trigger factor binding to the ribosome. In Janthinobacterium sp. (strain Marseille) (Minibacterium massiliensis), this protein is Large ribosomal subunit protein uL23.